Here is a 520-residue protein sequence, read N- to C-terminus: Cytochrome P450 84A1 (520 aa).

At Met1 the chain carries N-acetylmethionine. Residues Leu12–Ile32 form a helical membrane-spanning segment. Heme is bound at residue Cys458.

It belongs to the cytochrome P450 family. It depends on heme as a cofactor.

Its subcellular location is the membrane. It functions in the pathway aromatic compound metabolism; phenylpropanoid biosynthesis. This is Cytochrome P450 84A1 (CYP84A1) from Arabidopsis thaliana (Mouse-ear cress).